Reading from the N-terminus, the 337-residue chain is Holliday junction branch migration complex subunit RuvB (337 aa).

Residues 4–186 (ADRLIAADNP…FGIVQRLEYY (183 aa)) are large ATPase domain (RuvB-L). ATP contacts are provided by residues isoleucine 25, arginine 26, glycine 67, lysine 70, threonine 71, threonine 72, 133–135 (EDY), arginine 176, tyrosine 186, and arginine 223. Threonine 71 is a Mg(2+) binding site. The segment at 187–257 (KVDDLQYIVQ…IADKALNMLD (71 aa)) is small ATPAse domain (RuvB-S). The tract at residues 260–337 (VCGFDYMDRK…LHFGIDRPDK (78 aa)) is head domain (RuvB-H). Positions 315 and 320 each coordinate DNA.

Belongs to the RuvB family. Homohexamer. Forms an RuvA(8)-RuvB(12)-Holliday junction (HJ) complex. HJ DNA is sandwiched between 2 RuvA tetramers; dsDNA enters through RuvA and exits via RuvB. An RuvB hexamer assembles on each DNA strand where it exits the tetramer. Each RuvB hexamer is contacted by two RuvA subunits (via domain III) on 2 adjacent RuvB subunits; this complex drives branch migration. In the full resolvosome a probable DNA-RuvA(4)-RuvB(12)-RuvC(2) complex forms which resolves the HJ.

The protein resides in the cytoplasm. The catalysed reaction is ATP + H2O = ADP + phosphate + H(+). The RuvA-RuvB-RuvC complex processes Holliday junction (HJ) DNA during genetic recombination and DNA repair, while the RuvA-RuvB complex plays an important role in the rescue of blocked DNA replication forks via replication fork reversal (RFR). RuvA specifically binds to HJ cruciform DNA, conferring on it an open structure. The RuvB hexamer acts as an ATP-dependent pump, pulling dsDNA into and through the RuvAB complex. RuvB forms 2 homohexamers on either side of HJ DNA bound by 1 or 2 RuvA tetramers; 4 subunits per hexamer contact DNA at a time. Coordinated motions by a converter formed by DNA-disengaged RuvB subunits stimulates ATP hydrolysis and nucleotide exchange. Immobilization of the converter enables RuvB to convert the ATP-contained energy into a lever motion, pulling 2 nucleotides of DNA out of the RuvA tetramer per ATP hydrolyzed, thus driving DNA branch migration. The RuvB motors rotate together with the DNA substrate, which together with the progressing nucleotide cycle form the mechanistic basis for DNA recombination by continuous HJ branch migration. Branch migration allows RuvC to scan DNA until it finds its consensus sequence, where it cleaves and resolves cruciform DNA. The protein is Holliday junction branch migration complex subunit RuvB of Aliivibrio salmonicida (strain LFI1238) (Vibrio salmonicida (strain LFI1238)).